Consider the following 293-residue polypeptide: Bisanhydrobacterioruberin hydratase (293 aa).

The next 7 membrane-spanning stretches (helical) occupy residues 36–56 (IAVV…EGLL), 66–86 (FVLF…FPLV), 89–109 (RAGL…LVGV), 134–154 (FGLP…VLLL), 171–191 (ATVM…GFWI), 199–219 (GVPW…VLLF), and 254–274 (LFYT…GLLW).

Belongs to the BABR hydratase family.

It localises to the membrane. The enzyme catalyses bacterioruberin = bisanhydrobacterioruberin + 2 H2O. Its pathway is carotenoid biosynthesis. In terms of biological role, involved in the biosynthesis of the acyclic C50 carotenoid bacterioruberin (BR). Catalyzes the reaction that introduces hydroxyl groups to C3'' and C3''' of bisanhydrobacterioruberin (BABR) to generate BR. This Haloarcula japonica (strain ATCC 49778 / DSM 6131 / JCM 7785 / NBRC 101032 / NCIMB 13157 / TR-1) protein is Bisanhydrobacterioruberin hydratase.